We begin with the raw amino-acid sequence, 181 residues long: Oligoribonuclease (181 aa).

One can recognise an Exonuclease domain in the interval 8-171; that stretch reads LIWIDLEMTG…DDIRESIAEL (164 aa). Tyr129 is a catalytic residue.

This sequence belongs to the oligoribonuclease family.

The protein localises to the cytoplasm. 3'-to-5' exoribonuclease specific for small oligoribonucleotides. This chain is Oligoribonuclease, found in Vibrio cholerae serotype O1 (strain ATCC 39541 / Classical Ogawa 395 / O395).